The sequence spans 101 residues: Protein RnfH (101 aa).

Belongs to the UPF0125 (RnfH) family.

The chain is Protein RnfH from Coxiella burnetii (strain CbuG_Q212) (Coxiella burnetii (strain Q212)).